The following is a 424-amino-acid chain: Arogenate dehydratase 3, chloroplastic (424 aa).

Residues 1-24 constitute a chloroplast transit peptide; that stretch reads MRTLLPSHTPATVTTAARRRHVIH. Positions 57 to 71 are enriched in low complexity; it reads EQSESLSSNSNGSSS. The disordered stretch occupies residues 57-77; that stretch reads EQSESLSSNSNGSSSYHVSAV. The 178-residue stretch at 122-299 folds into the Prephenate dehydratase domain; it reads RVAYQGVPGA…NVTRFVMLAR (178 aa). Residues 313–404 enclose the ACT domain; that stretch reads SIVFAHEKGT…SFLRVLGSYP (92 aa).

As to quaternary structure, may interact with GPA1. In terms of tissue distribution, expressed in roots, leaves, stems, flowers and siliques.

Its subcellular location is the plastid. It is found in the chloroplast stroma. The catalysed reaction is L-arogenate + H(+) = L-phenylalanine + CO2 + H2O. It functions in the pathway amino-acid biosynthesis; L-phenylalanine biosynthesis; L-phenylalanine from L-arogenate: step 1/1. Its function is as follows. Converts the prephenate produced from the shikimate-chorismate pathway into phenylalanine. Together with GCR1 and GPA1, required for blue light-mediated synthesis of phenylpyruvate and subsequently of phenylalanine (Phe), in etiolated seedlings. The polypeptide is Arogenate dehydratase 3, chloroplastic (Arabidopsis thaliana (Mouse-ear cress)).